Here is a 687-residue protein sequence, read N- to C-terminus: Follicle-stimulating hormone receptor (687 aa).

Residues 1–17 (MALLLVSLLAFLSLGSG) form the signal peptide. The region spanning 18 to 46 (CHHQVCHYSNRVFLCQESKVTEIPSDLPR) is the LRRNT domain. Topologically, residues 18 to 358 (CHHQVCHYSN…EDIMGYDILR (341 aa)) are extracellular. Cys23 and Cys32 are disulfide-bonded. LRR repeat units follow at residues 49–72 (LELRFVLTKLRVIPKGAFSGFGDL), 73–97 (KKIEISQNDVLEVIEANVFSNLPKL), 98–118 (HEIRIEKANNLLYIDHDAFQN), 119–143 (LPNLQYLLISNTGIKHLPAVHKIQS), 144–169 (LQKVLLDIQDNINIHIVERNSFMGLS), 170–192 (FESMILRLSKNGIQEIHNCAFNG), 193–216 (TQLDELNLSDNNNLEELPNDVFQG), 217–240 (ASGPVILDISGTRIHSLPNYGLEN), and 241–259 (LKKLRARSTYNLKKLPSLE). 2 N-linked (GlcNAc...) asparagine glycosylation sites follow: Asn191 and Asn199. 4 cysteine pairs are disulfide-bonded: Cys275/Cys338, Cys276/Cys292, Cys276/Cys348, and Cys292/Cys330. Asn293 is a glycosylation site (N-linked (GlcNAc...) asparagine). Tyr327 carries the sulfotyrosine modification. A helical transmembrane segment spans residues 359–379 (VLIWFISILAITGNIIVLVIL). Topologically, residues 380–390 (ITSQYKLTVPR) are cytoplasmic. A helical transmembrane segment spans residues 391–413 (FLMCNLAFADLCIGIYLLLIASV). Over 414 to 435 (DIHTKSQYHNYAIDWQTGAGCD) the chain is Extracellular. The cysteines at positions 434 and 509 are disulfide-linked. Residues 436-457 (AAGFFTVFGSELSVYTLTAITL) form a helical membrane-spanning segment. The Cytoplasmic segment spans residues 458–477 (ERWHTITHAMQLECKVQLRH). The chain crosses the membrane as a helical span at residues 478–500 (AASVMLVGWIFGFGVGLLPIFGI). At 501-520 (STYMKVSICLPMDIDSPLSQ) the chain is on the extracellular side. Residues 521-542 (LYVMSLLVLNVLAFVVICGCYT) form a helical membrane-spanning segment. Over 543-565 (HIYLTVRNPNIVSSSSDTKIAKR) the chain is Cytoplasmic. The chain crosses the membrane as a helical span at residues 566 to 589 (MGILIFTDFLCMAPISFFGISASL). At 590–600 (KVALITVSKSK) the chain is on the extracellular side. Residues 601–622 (ILLVLFYPINSCANPFLYAIFT) traverse the membrane as a helical segment. At 623–687 (KNFRRDFFIL…LVPLSHLAQN (65 aa)) the chain is on the cytoplasmic side.

The protein belongs to the G-protein coupled receptor 1 family. FSH/LSH/TSH subfamily. In terms of assembly, homotrimer. Functions as a homotrimer binding the FSH hormone heterodimer composed of CGA and FSHB. Interacts with ARRB2. Interacts with APPL2; interaction is independent of follicle stimulating hormone stimulation. Post-translationally, N-glycosylated; indirectly required for FSH-binding, possibly via a conformational change that allows high affinity binding of hormone. In terms of processing, sulfated.

Its subcellular location is the cell membrane. In terms of biological role, g protein-coupled receptor for follitropin, the follicle-stimulating hormone. Through cAMP production activates the downstream PI3K-AKT and ERK1/ERK2 signaling pathways. The chain is Follicle-stimulating hormone receptor (FSHR) from Equus asinus (Donkey).